The primary structure comprises 247 residues: MAGHSKWANIQHRKGRQDAKRGKMFTKAAKEIIIAAKAGGDPVGNSRLRAAIAAAKAINLPKDKIENAIKKGTGELAGGDILEMAYEGYGPGGVALIVEVATDNKNRTVAEVRHILSKHGGSMGESGCVAWMFDRKGVITLEKDKYTEEQLMEVALEAGAEDVTDEGESWEVVTAAADFNAVREALEAAGVEMQSAEFTMVPQNEIEVDAETGRKLMRLVDALEDNDDVQNVHANFDLPDELLAELG.

Residues M1–G22 form a disordered region.

It belongs to the TACO1 family.

Its subcellular location is the cytoplasm. The polypeptide is Probable transcriptional regulatory protein DVU_2259 (Nitratidesulfovibrio vulgaris (strain ATCC 29579 / DSM 644 / CCUG 34227 / NCIMB 8303 / VKM B-1760 / Hildenborough) (Desulfovibrio vulgaris)).